We begin with the raw amino-acid sequence, 1004 residues long: 2-oxoglutarate dehydrogenase E1 component (1004 aa).

The protein belongs to the alpha-ketoglutarate dehydrogenase family. As to quaternary structure, homodimer. Part of the 2-oxoglutarate dehydrogenase (OGDH) complex composed of E1 (2-oxoglutarate dehydrogenase), E2 (dihydrolipoamide succinyltransferase) and E3 (dihydrolipoamide dehydrogenase); the complex contains multiple copies of the three enzymatic components (E1, E2 and E3). Thiamine diphosphate is required as a cofactor.

It catalyses the reaction N(6)-[(R)-lipoyl]-L-lysyl-[protein] + 2-oxoglutarate + H(+) = N(6)-[(R)-S(8)-succinyldihydrolipoyl]-L-lysyl-[protein] + CO2. Functionally, E1 component of the 2-oxoglutarate dehydrogenase (OGDH) complex which catalyzes the decarboxylation of 2-oxoglutarate, the first step in the conversion of 2-oxoglutarate to succinyl-CoA and CO(2). The protein is 2-oxoglutarate dehydrogenase E1 component of Brucella ovis (strain ATCC 25840 / 63/290 / NCTC 10512).